Consider the following 968-residue polypeptide: Probable histidine kinase 1 (968 aa).

Coiled coils occupy residues 89 to 120 and 169 to 204; these read LLKE…FQDE and KERA…QSHT. The Histidine kinase domain maps to 372–655; it reads TMSHEIRSPL…TFSFVLPCKI (284 aa). H375 is subject to Phosphohistidine; by autocatalysis. The interval 737–757 is disordered; that stretch reads STNSASTAHQSNGPSVSRTNK. The span at 738–754 shows a compositional bias: polar residues; sequence TNSASTAHQSNGPSVSR. The 148-residue stretch at 818–965 folds into the Response regulatory domain; that stretch reads KILLVEDNKV…NIKECLQQYL (148 aa). D867 carries the post-translational modification 4-aspartylphosphate.

Post-translationally, activation probably requires a transfer of a phosphate group between a His in the transmitter domain and an Asp of the receiver domain.

The catalysed reaction is ATP + protein L-histidine = ADP + protein N-phospho-L-histidine.. Its function is as follows. Cytokinin receptor related to bacterial two-component regulators. Functions as a histidine kinase and transmits the stress signal to a downstream MAPK cascade. The polypeptide is Probable histidine kinase 1 (Oryza sativa subsp. indica (Rice)).